A 254-amino-acid polypeptide reads, in one-letter code: uncharacterized protein (254 aa).

8 residues coordinate NADP(+): isoleucine 18, serine 37, aspartate 63, asparagine 90, tyrosine 159, lysine 163, valine 192, and threonine 194. Tyrosine 159 serves as the catalytic Proton donor. The active-site Lowers pKa of active site Tyr is lysine 163.

Belongs to the short-chain dehydrogenases/reductases (SDR) family.

It localises to the cytoplasm. The protein localises to the nucleus. This is an uncharacterized protein from Schizosaccharomyces pombe (strain 972 / ATCC 24843) (Fission yeast).